The primary structure comprises 390 residues: Succinate--CoA ligase [ADP-forming] subunit beta (390 aa).

Positions 9–244 (KEIFRKYGVP…LDEEEPTEVE (236 aa)) constitute an ATP-grasp domain. ATP contacts are provided by residues Lys-46, 53-55 (GRG), Glu-99, Ala-102, and Glu-107. Mg(2+) is bound by residues Asn-199 and Asp-213. Substrate contacts are provided by residues Asn-264 and 321-323 (GIV).

It belongs to the succinate/malate CoA ligase beta subunit family. In terms of assembly, heterotetramer of two alpha and two beta subunits. Requires Mg(2+) as cofactor.

It catalyses the reaction succinate + ATP + CoA = succinyl-CoA + ADP + phosphate. The enzyme catalyses GTP + succinate + CoA = succinyl-CoA + GDP + phosphate. Its pathway is carbohydrate metabolism; tricarboxylic acid cycle; succinate from succinyl-CoA (ligase route): step 1/1. Succinyl-CoA synthetase functions in the citric acid cycle (TCA), coupling the hydrolysis of succinyl-CoA to the synthesis of either ATP or GTP and thus represents the only step of substrate-level phosphorylation in the TCA. The beta subunit provides nucleotide specificity of the enzyme and binds the substrate succinate, while the binding sites for coenzyme A and phosphate are found in the alpha subunit. This chain is Succinate--CoA ligase [ADP-forming] subunit beta, found in Nautilia profundicola (strain ATCC BAA-1463 / DSM 18972 / AmH).